A 428-amino-acid chain; its full sequence is D-inositol 3-phosphate glycosyltransferase (428 aa).

A 1D-myo-inositol 3-phosphate-binding site is contributed by His-5. UDP-N-acetyl-alpha-D-glucosamine is bound by residues 11-12 (QP) and Gly-19. Residues 16 to 21 (DAGGMN), Lys-74, Tyr-107, Thr-131, and Arg-151 contribute to the 1D-myo-inositol 3-phosphate site. 3 residues coordinate UDP-N-acetyl-alpha-D-glucosamine: Arg-225, Lys-230, and Gln-283. The Mg(2+) site is built by Phe-292, Gln-293, and Ala-295. UDP-N-acetyl-alpha-D-glucosamine is bound by residues Glu-305 and Glu-313. Thr-319 is a binding site for Mg(2+).

This sequence belongs to the glycosyltransferase group 1 family. MshA subfamily. Homodimer.

The catalysed reaction is 1D-myo-inositol 3-phosphate + UDP-N-acetyl-alpha-D-glucosamine = 1D-myo-inositol 2-acetamido-2-deoxy-alpha-D-glucopyranoside 3-phosphate + UDP + H(+). In terms of biological role, catalyzes the transfer of a N-acetyl-glucosamine moiety to 1D-myo-inositol 3-phosphate to produce 1D-myo-inositol 2-acetamido-2-deoxy-glucopyranoside 3-phosphate in the mycothiol biosynthesis pathway. This Mycobacterium leprae (strain Br4923) protein is D-inositol 3-phosphate glycosyltransferase.